Consider the following 904-residue polypeptide: NADH-quinone oxidoreductase subunit G (904 aa).

Residues 1-83 (MATIHVDGKA…GTWISIDDEE (83 aa)) enclose the 2Fe-2S ferredoxin-type domain. Residues C34, C45, C48, and C67 each contribute to the [2Fe-2S] cluster site. A 4Fe-4S His(Cys)3-ligated-type domain is found at 83 to 122 (ESKAFRASVVEWLMTNHPHDCPVCEEGGHCHLQDMTVMTG). [4Fe-4S] cluster-binding residues include H99, C103, C106, C112, C151, C154, C157, C201, C228, C231, C235, and C263. Residues 221–277 (MQFAPSICHGCSSGCNISPGERYGELRRIENRFNGSVNQYFLCDRGRFGYGYVNRKD) form the 4Fe-4S Mo/W bis-MGD-type domain.

It belongs to the complex I 75 kDa subunit family. Composed of 13 different subunits. Subunits NuoCD, E, F, and G constitute the peripheral sector of the complex. Requires [2Fe-2S] cluster as cofactor. It depends on [4Fe-4S] cluster as a cofactor.

The catalysed reaction is a quinone + NADH + 5 H(+)(in) = a quinol + NAD(+) + 4 H(+)(out). In terms of biological role, NDH-1 shuttles electrons from NADH, via FMN and iron-sulfur (Fe-S) centers, to quinones in the respiratory chain. The immediate electron acceptor for the enzyme in this species is believed to be ubiquinone. Couples the redox reaction to proton translocation (for every two electrons transferred, four hydrogen ions are translocated across the cytoplasmic membrane), and thus conserves the redox energy in a proton gradient. This chain is NADH-quinone oxidoreductase subunit G (nuoG), found in Pseudomonas putida (strain ATCC 47054 / DSM 6125 / CFBP 8728 / NCIMB 11950 / KT2440).